A 431-amino-acid chain; its full sequence is Glucose-1-phosphate adenylyltransferase (431 aa).

Alpha-D-glucose 1-phosphate-binding positions include glycine 163, 178 to 179 (EK), and serine 210.

Belongs to the bacterial/plant glucose-1-phosphate adenylyltransferase family. As to quaternary structure, homotetramer.

The catalysed reaction is alpha-D-glucose 1-phosphate + ATP + H(+) = ADP-alpha-D-glucose + diphosphate. The protein operates within glycan biosynthesis; glycogen biosynthesis. Functionally, involved in the biosynthesis of ADP-glucose, a building block required for the elongation reactions to produce glycogen. Catalyzes the reaction between ATP and alpha-D-glucose 1-phosphate (G1P) to produce pyrophosphate and ADP-Glc. In Synechococcus sp. (strain WH7803), this protein is Glucose-1-phosphate adenylyltransferase.